A 218-amino-acid chain; its full sequence is Small ribosomal subunit protein uS5 (218 aa).

The S5 DRBM domain maps to 55–118; that stretch reads LDHEVIDVSI…RNAKLNIIPV (64 aa).

The protein belongs to the universal ribosomal protein uS5 family. In terms of assembly, part of the 30S ribosomal subunit. Contacts protein S4.

Its function is as follows. With S4 and S12 plays an important role in translational accuracy. The polypeptide is Small ribosomal subunit protein uS5 (Aeropyrum pernix (strain ATCC 700893 / DSM 11879 / JCM 9820 / NBRC 100138 / K1)).